The sequence spans 563 residues: Membrane protein insertase YidC (563 aa).

A helical transmembrane segment spans residues 6-26; sequence TILWMIFSFSLLLLWNNWQIH. A disordered region spans residues 36-68; it reads PPASSAASPAEGQQAAANGQAATPSVPTTPAAA. Helical transmembrane passes span 373 to 393, 443 to 463, 482 to 502, and 512 to 532; these read WGWA…PLAA, LPMV…LASV, PYFI…KLNP, and VMMI…AGLV.

This sequence belongs to the OXA1/ALB3/YidC family. Type 1 subfamily. As to quaternary structure, interacts with the Sec translocase complex via SecD. Specifically interacts with transmembrane segments of nascent integral membrane proteins during membrane integration.

Its subcellular location is the cell inner membrane. Required for the insertion and/or proper folding and/or complex formation of integral membrane proteins into the membrane. Involved in integration of membrane proteins that insert both dependently and independently of the Sec translocase complex, as well as at least some lipoproteins. Aids folding of multispanning membrane proteins. The sequence is that of Membrane protein insertase YidC from Bordetella petrii (strain ATCC BAA-461 / DSM 12804 / CCUG 43448).